A 550-amino-acid chain; its full sequence is MVGEEKMSLRNRLSKSRENPEEDEDQRKPAKESLEAPSNGRIDIKQLIAKKIKLTAEAEELKPFFMKEVGSHFDDFVTNLIEKSASLDNGGCALTTFSILEGEKNNHRAKDLRAPPEQGKIFIARRSLLDELLEVDHIRTIYHMFIALLILFILSTLVVDYIDEGRLVLEFSLLSYAFGKFPTVVWTWWIMFLSTFSVPYFLFQRWATGYSKSSHPLINSLFHGFLFMVFQIGILGFGPTYVVLAYTLPPASRFIIIFEQIRFVMKAHSFVRENVPRVLNSAKEKSSTVPIPTVNQYLYFLFAPTLIYRDSYPRNPTVRWGYVAMQFAQVFGCFFYVYYIFERLCAPLFRNIKQEPFSARVLVLCVFNSILPGVLILFLTFFAFLHCWLNAFAEMLRFGDRMFYKDWWNSTSYSNYYRTWNVVVHDWLYYYAYKDFLWFFSKRFKSAAMLAAFAVSAVVHEYALAVCLSFFYPVLFVLFMFFGMAFNFIVNDSRKKPIWNVMMWTSLFLGNGVLLCFYSQEWYARQHCPLKNPTFLDYVRPRSWTCRYVF.

Methionine 1 bears the N-acetylmethionine mark. A disordered region spans residues 1-36 (MVGEEKMSLRNRLSKSRENPEEDEDQRKPAKESLEA). Residues 1–138 (MVGEEKMSLR…LDELLEVDHI (138 aa)) lie on the Cytoplasmic side of the membrane. Position 8 is a phosphoserine (serine 8). Positions 15–34 (KSRENPEEDEDQRKPAKESL) are enriched in basic and acidic residues. Histidine 137 provides a ligand contact to cholesterol. The chain crosses the membrane as a helical span at residues 139-160 (RTIYHMFIALLILFILSTLVVD). At 161–180 (YIDEGRLVLEFSLLSYAFGK) the chain is on the lumenal side. Residues 181–206 (FPTVVWTWWIMFLSTFSVPYFLFQRW) traverse the membrane as a helical segment. The Cytoplasmic portion of the chain corresponds to 207–218 (ATGYSKSSHPLI). The helical transmembrane segment at 219 to 244 (NSLFHGFLFMVFQIGILGFGPTYVVL) threads the bilayer. Topologically, residues 245–252 (AYTLPPAS) are lumenal. A helical membrane pass occupies residues 253–276 (RFIIIFEQIRFVMKAHSFVRENVP). Topologically, residues 277-319 (RVLNSAKEKSSTVPIPTVNQYLYFLFAPTLIYRDSYPRNPTVR) are cytoplasmic. A helical transmembrane segment spans residues 320-352 (WGYVAMQFAQVFGCFFYVYYIFERLCAPLFRNI). Residues 353 to 369 (KQEPFSARVLVLCVFNS) lie on the Lumenal side of the membrane. A helical membrane pass occupies residues 370–395 (ILPGVLILFLTFFAFLHCWLNAFAEM). Residues 396-443 (LRFGDRMFYKDWWNSTSYSNYYRTWNVVVHDWLYYYAYKDFLWFFSKR) are Cytoplasmic-facing. The FYXDWWN motif signature appears at 403–409 (FYKDWWN). 7 residues coordinate an acyl-CoA: asparagine 415, arginine 418, asparagine 421, histidine 425, tyrosine 433, lysine 445, and serine 456. Residues 444–468 (FKSAAMLAAFAVSAVVHEYALAVCL) form a helical membrane-spanning segment. Histidine 460 is a catalytic residue. At 469–474 (SFFYPV) the chain is on the lumenal side. A helical transmembrane segment spans residues 475–490 (LFVLFMFFGMAFNFIV). At 491–496 (NDSRKK) the chain is on the cytoplasmic side. The chain crosses the membrane as a helical span at residues 497–528 (PIWNVMMWTSLFLGNGVLLCFYSQEWYARQHC). An intrachain disulfide couples cysteine 528 to cysteine 546. Residues 529 to 550 (PLKNPTFLDYVRPRSWTCRYVF) lie on the Lumenal side of the membrane.

The protein belongs to the membrane-bound acyltransferase family. Sterol o-acyltransferase subfamily. May form homo- or heterodimers. Interacts with UBIAD1. As to expression, expressed in most tissues, but most strongly in the adrenal gland. Expressed more strongly in liver Kupffer cells than in hepatocytes.

Its subcellular location is the endoplasmic reticulum membrane. It carries out the reaction a sterol + a long-chain fatty acyl-CoA = a long-chain 3-hydroxysterol ester + CoA. The enzyme catalyses cholesterol + an acyl-CoA = a cholesterol ester + CoA. The catalysed reaction is cholesterol + (9Z)-octadecenoyl-CoA = cholesteryl (9Z-octadecenoate) + CoA. It catalyses the reaction cholesterol + hexadecanoyl-CoA = cholesteryl hexadecanoate + CoA. It carries out the reaction octadecanoyl-CoA + cholesterol = cholesteryl octadecanoate + CoA. The enzyme catalyses (9Z,12Z)-octadecadienoyl-CoA + cholesterol = cholesteryl (9Z,12Z)-octadecadienoate + CoA. The catalysed reaction is (5Z,8Z,11Z,14Z)-eicosatetraenoyl-CoA + cholesterol = cholesteryl (5Z,8Z,11Z,14Z)-eicosatetraenoate + CoA. It catalyses the reaction (9Z)-hexadecenoyl-CoA + cholesterol = cholesteryl (9Z)-hexadecenoate + CoA. It carries out the reaction (11Z)-octadecenoyl-CoA + cholesterol = cholesteryl (11Z)-octadecenoate + CoA. The enzyme catalyses (7Z)-octadecenoyl-CoA + cholesterol = cholesteryl (7Z)-octadecenoate + CoA. Functionally, catalyzes the formation of fatty acid-cholesterol esters, which are less soluble in membranes than cholesterol. Plays a role in lipoprotein assembly and dietary cholesterol absorption. Preferentially utilizes oleoyl-CoA ((9Z)-octadecenoyl-CoA) as a substrate: shows a higher activity towards an acyl-CoA substrate with a double bond at the delta-9 position (9Z) than towards saturated acyl-CoA or an unsaturated acyl-CoA with a double bond at the delta-7 (7Z) or delta-11 (11Z) positions. The protein is Sterol O-acyltransferase 1 (SOAT1) of Macaca fascicularis (Crab-eating macaque).